The primary structure comprises 392 residues: Zinc transporter zipt-7.1 (392 aa).

N-linked (GlcNAc...) asparagine glycosylation is present at N63. 2 helical membrane-spanning segments follow: residues 82–102 (VFSL…LFFI) and 114–134 (ILLA…IIPH). The segment at 139-162 (HSHGAHDHDHAHSHDHAHNDHSHD) is disordered. Over residues 142 to 162 (GAHDHDHAHSHDHAHNDHSHD) the composition is skewed to basic and acidic residues. The helical transmembrane segment at 170–190 (GIYVIAGILVFMMVEQLVRII) threads the bilayer. N248 carries N-linked (GlcNAc...) asparagine glycosylation. Helical transmembrane passes span 255–275 (IGAS…TVLL), 304–324 (VTAL…NPVL), and 331–351 (GAIM…SVIP). N361 is a glycosylation site (N-linked (GlcNAc...) asparagine). Residues 371–391 (SLVHLIAICMGVGMMYIVSLV) traverse the membrane as a helical segment.

It belongs to the ZIP transporter (TC 2.A.5) family. KE4/Catsup subfamily.

It localises to the membrane. Its function is as follows. Zinc transporter which regulates intracellular zinc levels. Required for spermatogenesis in both hermaphrodites and males where it resides in an inactive form in immature sperm, spermatids, but is likely activated in response to reduced spe-4 and spe-6 function. Upon activation, mediates the release of zinc from internal stores in spermatids into the cytoplasm. The resulting increase in cytoplasmic zinc levels promotes spermatid activation and subsequent differentiation into mature motile sperm that are capable of fertilization. The polypeptide is Zinc transporter zipt-7.1 (Caenorhabditis briggsae).